A 496-amino-acid chain; its full sequence is Guanosine-5'-triphosphate,3'-diphosphate pyrophosphatase (496 aa).

The protein belongs to the GppA/Ppx family. GppA subfamily.

It carries out the reaction guanosine 3'-diphosphate 5'-triphosphate + H2O = guanosine 3',5'-bis(diphosphate) + phosphate + H(+). The protein operates within purine metabolism; ppGpp biosynthesis; ppGpp from GTP: step 2/2. Functionally, catalyzes the conversion of pppGpp to ppGpp. Guanosine pentaphosphate (pppGpp) is a cytoplasmic signaling molecule which together with ppGpp controls the 'stringent response', an adaptive process that allows bacteria to respond to amino acid starvation, resulting in the coordinated regulation of numerous cellular activities. This chain is Guanosine-5'-triphosphate,3'-diphosphate pyrophosphatase, found in Aeromonas salmonicida (strain A449).